The primary structure comprises 331 residues: Beta-ketoacyl-[acyl-carrier-protein] synthase III (331 aa).

Residues Cys115 and His255 contribute to the active site. Residues 256 to 260 (QANFR) are ACP-binding. Asn285 is a catalytic residue.

Belongs to the thiolase-like superfamily. FabH family. In terms of assembly, homodimer.

The protein resides in the cytoplasm. The enzyme catalyses malonyl-[ACP] + acetyl-CoA + H(+) = 3-oxobutanoyl-[ACP] + CO2 + CoA. The protein operates within lipid metabolism; fatty acid biosynthesis. In terms of biological role, catalyzes the condensation reaction of fatty acid synthesis by the addition to an acyl acceptor of two carbons from malonyl-ACP. Catalyzes the first condensation reaction which initiates fatty acid synthesis and may therefore play a role in governing the total rate of fatty acid production. Possesses both acetoacetyl-ACP synthase and acetyl transacylase activities. Its substrate specificity determines the biosynthesis of branched-chain and/or straight-chain of fatty acids. This Helicobacter pylori (strain J99 / ATCC 700824) (Campylobacter pylori J99) protein is Beta-ketoacyl-[acyl-carrier-protein] synthase III.